We begin with the raw amino-acid sequence, 229 residues long: Triosephosphate isomerase (229 aa).

9 to 11 contacts substrate; sequence NLK. His-93 acts as the Electrophile in catalysis. Catalysis depends on Glu-141, which acts as the Proton acceptor. Residues Ile-146, Gly-181, and 202-203 each bind substrate; that span reads AS.

This sequence belongs to the triosephosphate isomerase family. Homotetramer; dimer of dimers.

The protein resides in the cytoplasm. It catalyses the reaction D-glyceraldehyde 3-phosphate = dihydroxyacetone phosphate. It participates in carbohydrate biosynthesis; gluconeogenesis. It functions in the pathway carbohydrate degradation; glycolysis; D-glyceraldehyde 3-phosphate from glycerone phosphate: step 1/1. Involved in the gluconeogenesis. Catalyzes stereospecifically the conversion of dihydroxyacetone phosphate (DHAP) to D-glyceraldehyde-3-phosphate (G3P). The polypeptide is Triosephosphate isomerase (Pyrobaculum islandicum (strain DSM 4184 / JCM 9189 / GEO3)).